Reading from the N-terminus, the 63-residue chain is Odorranain-B1 (63 aa).

A signal peptide spans 1 to 22 (MFTTKKPLLLLFFLGIISLSVC). The propeptide occupies 23–41 (EQERDADEEDGGEVTEEEV).

It belongs to the frog skin active peptide (FSAP) family. Brevinin subfamily. In terms of tissue distribution, expressed by the skin glands.

The protein resides in the secreted. This chain is Odorranain-B1, found in Odorrana hainanensis (Odor frog).